A 163-amino-acid polypeptide reads, in one-letter code: E1B protein, small T-antigen (163 aa).

The protein belongs to the adenoviridae E1B 19 kDa protein family.

Its subcellular location is the host cell membrane. The protein localises to the host nucleus envelope. It localises to the host nucleus lamina. Putative adenovirus Bcl-2 homolog that inhibits apoptosis induced by TNF or FAS pathways, as well as p53-mediated apoptosis. Without E1B 19K function, virus production is compromised because of premature death of host cell. Interacts with Bax protein in cell lysates. This Human adenovirus A serotype 12 (HAdV-12) protein is E1B protein, small T-antigen.